Reading from the N-terminus, the 443-residue chain is Aklavinone 7-beta-L-rhodosaminyltransferase (443 aa).

An N-terminal signal peptide occupies residues 1–23; sequence MRVLLTSFALDAHFNGSVPLAWA.

The protein belongs to the glycosyltransferase 28 family.

The enzyme catalyses dTDP-beta-L-rhodosamine + aklavinone = aclacinomycin T + dTDP + 2 H(+). The activity of AknS is substantially increased by the addition of the accessory protein AknT. Functionally, involved in the biosynthesis of the anthracycline antitumor agent aclacinomycin A. Catalyzes the transfer of the proximal deoxyhexose, L-rhodosamine, from dTDP-beta-L-rhodosamine to the C7-OH of aklavinone aglycone to yield aclacinomycin T (rhodosaminyl-aklavinone). It can also use dTDP-2-deoxy-beta-L-fucose, TDP-2-deoxyfucose, dTDP-4-amino-2-deoxyrhamnose, TDP-L-rhodosamine as sugar donor and epsilon-rhodomycinone as sugar acceptor. In Streptomyces galilaeus, this protein is Aklavinone 7-beta-L-rhodosaminyltransferase.